The primary structure comprises 300 residues: Acetylglutamate kinase (300 aa).

Substrate-binding positions include 72-73, arginine 94, and asparagine 197; that span reads GG.

It belongs to the acetylglutamate kinase family. ArgB subfamily.

It is found in the cytoplasm. It catalyses the reaction N-acetyl-L-glutamate + ATP = N-acetyl-L-glutamyl 5-phosphate + ADP. Its pathway is amino-acid biosynthesis; L-arginine biosynthesis; N(2)-acetyl-L-ornithine from L-glutamate: step 2/4. Functionally, catalyzes the ATP-dependent phosphorylation of N-acetyl-L-glutamate. This Aromatoleum aromaticum (strain DSM 19018 / LMG 30748 / EbN1) (Azoarcus sp. (strain EbN1)) protein is Acetylglutamate kinase.